We begin with the raw amino-acid sequence, 318 residues long: Glutathione synthetase (318 aa).

One can recognise an ATP-grasp domain in the interval 125 to 311 (EKLFTAWFPE…ITGKLMDAIE (187 aa)). 151 to 208 (FRQEHGDIILKPLDGMGGASIFRVKENDPNVSVIIETLTNHGQNYAMAQTFVPDISNG) lines the ATP pocket. Mg(2+) contacts are provided by Glu282 and Asn284.

The protein belongs to the prokaryotic GSH synthase family. Mg(2+) is required as a cofactor. Requires Mn(2+) as cofactor.

The enzyme catalyses gamma-L-glutamyl-L-cysteine + glycine + ATP = glutathione + ADP + phosphate + H(+). It participates in sulfur metabolism; glutathione biosynthesis; glutathione from L-cysteine and L-glutamate: step 2/2. The sequence is that of Glutathione synthetase from Vibrio vulnificus (strain YJ016).